The sequence spans 188 residues: Quinone reductase (188 aa).

FMN-binding positions include Ser-13–Asn-20, Glu-82–Tyr-85, and Ser-117.

The protein belongs to the SsuE family. In terms of assembly, homotetramer. Dimer of dimers. The tetrameric configuration has a central role in chromate reductase activity. Requires FMN as cofactor.

The catalysed reaction is a quinone + NADH + H(+) = a quinol + NAD(+). The enzyme catalyses a quinone + NADPH + H(+) = a quinol + NADP(+). It catalyses the reaction Cr(6+) + 2 NADH + O2 = Cr(3+) + superoxide + 2 NAD(+) + 2 H(+). It carries out the reaction Cr(6+) + 2 NADPH + O2 = Cr(3+) + superoxide + 2 NADP(+) + 2 H(+). Its function is as follows. Catalyzes the reduction of quinones. Acts by simultaneous two-electron transfer, avoiding formation of highly reactive semiquinone intermediates and producing quinols that promote tolerance of H(2)O(2). Quinone reduction is probably the primary biological role of ChrR. Can also reduce toxic chromate to insoluble and less toxic Cr(3+). Catalyzes the transfer of three electrons to Cr(6+) producing Cr(3+) and one electron to molecular oxygen without producing the toxic Cr(5+) species and only producing a minimal amount of reactive oxygen species (ROS). Chromate reduction protects the cell against chromate toxicity, but is likely a secondary activity. The polypeptide is Quinone reductase (chrR) (Escherichia coli O157:H7).